The chain runs to 318 residues: Olfactory receptor 5M5 (318 aa).

At 1–31 (MLAPKKMVRGNYSMVTEFILLGLTDRPELQP) the chain is on the extracellular side. Asparagine 11 carries N-linked (GlcNAc...) asparagine glycosylation. Residues 32–52 (LLFVLFLVIYLITVGGNLGMM) form a helical membrane-spanning segment. Residues 53-60 (VLIRIDSR) lie on the Cytoplasmic side of the membrane. Residues 61-81 (LHTPMYYFLASLSCLDLCYST) form a helical membrane-spanning segment. Residues 82-105 (NVTPKMLVNFLSEKKTISYAACLV) are Extracellular-facing. Cysteine 103 and cysteine 195 form a disulfide bridge. The chain crosses the membrane as a helical span at residues 106–126 (QCYFFIAMVITEYYMLAVMAY). Over 127 to 139 (DRYMAICNPLLYS) the chain is Cytoplasmic. Residues 140-160 (SKMSKGVCVRLIAGPYIYGFL) form a helical membrane-spanning segment. Residues 161 to 202 (SGLMETMWTYRLTFCGSNIINHFYCADPPLIRLSCSDTFIKE) are Extracellular-facing. Residues 203-223 (TSMFVVAGFNLSNSLFIILIS) form a helical membrane-spanning segment. The Cytoplasmic portion of the chain corresponds to 224-243 (YLFILIAILRMRSAEGRRKA). Residues 244-264 (FSTCGSHLVAVTVFYGTLFCM) form a helical membrane-spanning segment. Over 265–277 (YVRPPTDKSVEQS) the chain is Extracellular. Residues 278 to 298 (KIIAVFYTFVSPMLNPIIYSL) traverse the membrane as a helical segment. Residues 299–318 (RNKDVKHAFWKLVRRNVLSK) lie on the Cytoplasmic side of the membrane.

This sequence belongs to the G-protein coupled receptor 1 family.

The protein localises to the cell membrane. Potential odorant receptor. This is Olfactory receptor 5M5 from Mus musculus (Mouse).